The sequence spans 382 residues: MSTWLLPENIADVLPSEARKIEELRRRLLDRFRSYGYEMVMPPLLEYLESLLTSGGNELRLRTFKLVDQVSGRTLGLRADMTPQVARIDAHLLNRQGVTRLCYAGPVLHTRPRGLHASREQLQIGAEIYGHAGLEADQEIQQLMLDALHLTGLKKIRLDLCHAGVLAALFARDAAAAERGEALYEALAGKDVPRLNELTDDLGADTRAALRALPRLYGDASVLDDARRLLPALPEIARALDDLAHLAAQVKDAEVAIDLADLRGYAYHSGAMFAAYVDGVPNAVAHGGRYDHVGQAYGRARPATGFSLDLREIARISPVEARGAAILAPWKQDDALRAAVGALRDAGEVVIQALPGHDHVLDEFACDRALVERDGAWVIEPR.

The protein belongs to the class-II aminoacyl-tRNA synthetase family. HisZ subfamily. In terms of assembly, heteromultimer composed of HisG and HisZ subunits.

It localises to the cytoplasm. Its pathway is amino-acid biosynthesis; L-histidine biosynthesis; L-histidine from 5-phospho-alpha-D-ribose 1-diphosphate: step 1/9. Functionally, required for the first step of histidine biosynthesis. May allow the feedback regulation of ATP phosphoribosyltransferase activity by histidine. The sequence is that of ATP phosphoribosyltransferase regulatory subunit from Burkholderia pseudomallei (strain K96243).